We begin with the raw amino-acid sequence, 247 residues long: Phosphoglycerate mutase 1 (247 aa).

Residues 8–15 (RHGQSEWN) and 21–22 (TG) contribute to the substrate site. Residue histidine 9 is the Tele-phosphohistidine intermediate of the active site. The residue at position 12 (serine 12) is a Phosphoserine. A Glycyl lysine isopeptide (Lys-Gly) (interchain with G-Cter in ubiquitin) cross-link involves residue lysine 31. Tyrosine 49 carries the post-translational modification Phosphotyrosine. A Glycyl lysine isopeptide (Lys-Gly) (interchain with G-Cter in ubiquitin) cross-link involves residue lysine 57. Position 60 (arginine 60) interacts with substrate. A Glycyl lysine isopeptide (Lys-Gly) (interchain with G-Cter in ubiquitin) cross-link involves residue lysine 71. The active-site Proton donor/acceptor is the glutamate 87. Residues 87 to 90 (ERHY), lysine 98, and 114 to 115 (RR) contribute to the substrate site. Residues serine 116, serine 127, and serine 128 each carry the phosphoserine modification. Residues lysine 139 and lysine 175 each participate in a glycyl lysine isopeptide (Lys-Gly) (interchain with G-Cter in ubiquitin) cross-link. 183–184 (GN) contacts substrate. Serine 185 bears the Phosphoserine mark. A Glycyl lysine isopeptide (Lys-Gly) (interchain with G-Cter in ubiquitin) cross-link involves residue lysine 191. At serine 197 the chain carries Phosphoserine.

The protein belongs to the phosphoglycerate mutase family. BPG-dependent PGAM subfamily. In terms of assembly, homotetramer: dimer of dimers.

The protein resides in the cytoplasm. It is found in the mitochondrion outer membrane. Its subcellular location is the mitochondrion intermembrane space. It catalyses the reaction (2R)-2-phosphoglycerate = (2R)-3-phosphoglycerate. The protein operates within carbohydrate degradation; glycolysis; pyruvate from D-glyceraldehyde 3-phosphate: step 3/5. Inhibited by inositol hexakisphosphate and benzene tri-, tetra- and hexacarboxylates. Its function is as follows. Interconversion of 3- and 2-phosphoglycerate with 2,3-bisphosphoglycerate as the primer of the reaction. Can also catalyze the reaction of EC 5.4.2.4 (synthase), but with a reduced activity. This is Phosphoglycerate mutase 1 (GPM1) from Saccharomyces cerevisiae (strain ATCC 204508 / S288c) (Baker's yeast).